A 286-amino-acid chain; its full sequence is Pantothenate synthetase (286 aa).

An ATP-binding site is contributed by Met-30 to His-37. The Proton donor role is filled by His-37. Gln-61 contributes to the (R)-pantoate binding site. Gln-61 contacts beta-alanine. Gly-149–Asp-152 serves as a coordination point for ATP. Gln-155 is a binding site for (R)-pantoate. ATP is bound by residues Val-178 and Leu-186–Arg-189.

This sequence belongs to the pantothenate synthetase family. As to quaternary structure, homodimer.

The protein resides in the cytoplasm. It catalyses the reaction (R)-pantoate + beta-alanine + ATP = (R)-pantothenate + AMP + diphosphate + H(+). It functions in the pathway cofactor biosynthesis; (R)-pantothenate biosynthesis; (R)-pantothenate from (R)-pantoate and beta-alanine: step 1/1. Functionally, catalyzes the condensation of pantoate with beta-alanine in an ATP-dependent reaction via a pantoyl-adenylate intermediate. The sequence is that of Pantothenate synthetase from Nitrosococcus oceani (strain ATCC 19707 / BCRC 17464 / JCM 30415 / NCIMB 11848 / C-107).